A 658-amino-acid polypeptide reads, in one-letter code: Exoribonuclease 2 (658 aa).

The 342-residue stretch at 189 to 530 (REDLTSLYFT…VNHRLIKQVL (342 aa)) folds into the RNB domain. Residues 576–658 (AVEFDCEIAD…ETRSIVGNII (83 aa)) enclose the S1 motif domain.

This sequence belongs to the RNR ribonuclease family. RNase II subfamily.

The protein resides in the cytoplasm. It catalyses the reaction Exonucleolytic cleavage in the 3'- to 5'-direction to yield nucleoside 5'-phosphates.. Involved in mRNA degradation. Hydrolyzes single-stranded polyribonucleotides processively in the 3' to 5' direction. The sequence is that of Exoribonuclease 2 from Actinobacillus pleuropneumoniae serotype 5b (strain L20).